The sequence spans 304 residues: N-carbamoyl-D-amino acid hydrolase (304 aa).

The CN hydrolase domain maps to 5-276 (MILAVGQQGP…DEVITAAVDL (272 aa)). Residues glutamate 47, lysine 127, and cysteine 172 contribute to the active site.

It carries out the reaction an N-carbamoyl-D-amino acid + H2O + 2 H(+) = a D-alpha-amino acid + NH4(+) + CO2. In terms of biological role, the enzyme catalyzes the hydrolysis of N-carbamoyl-D-amino acids to the corresponding which are useful intermediates in the preparation of beta-lactam antibiotics. Industrial production of beta-lactam antibiotics is now being developed using this enzyme. The chain is N-carbamoyl-D-amino acid hydrolase from Agrobacterium sp. (strain KNK712).